The chain runs to 331 residues: UPF0324 membrane protein YdhF (331 aa).

Transmembrane regions (helical) follow at residues 2–20, 24–46, 82–104, 114–136, 148–170, 204–226, 247–269, and 308–330; these read SILP…SYLL, IFHS…NLYF, LGFS…VLFM, VSAL…VEPV, IAMV…TWMF, TLAT…YFGF, SFLP…IHFV, and LIYG…SLLI.

The protein belongs to the UPF0324 family.

The protein resides in the cell membrane. In Lactococcus lactis subsp. lactis (strain IL1403) (Streptococcus lactis), this protein is UPF0324 membrane protein YdhF (ydhF).